The following is a 586-amino-acid chain: RNA-directed RNA polymerase subunit beta (586 aa).

A RdRp catalytic domain is found at 259-391 (VRAYSGSCSN…TNEKKTFFDG (133 aa)). Residues D274, D359, and D360 each coordinate Mg(2+).

In terms of assembly, homodimer; the replicase complex can dimerize. Part of the viral RNA-dependent RNA polymerase complex, the other subunits are the host ribosomal protein S1, EF-Tu and EF-Ts. S1 is needed for the initiation of genomic RNA (+)-strand replication. Mg(2+) is required as a cofactor.

It carries out the reaction RNA(n) + a ribonucleoside 5'-triphosphate = RNA(n+1) + diphosphate. In terms of biological role, this is the catalytic subunit of the viral RNA-dependent RNA polymerase complex. This complex is involved in viral RNA replication that produces (+)-stranded genomes via a complementary, (-)-stranded intermediate. Binds RNA cooperatively with the host ribosomal protein S1. In Escherichia coli, this protein is RNA-directed RNA polymerase subunit beta.